The following is a 469-amino-acid chain: 3-isopropylmalate dehydratase large subunit (469 aa).

3 residues coordinate [4Fe-4S] cluster: C350, C410, and C413.

This sequence belongs to the aconitase/IPM isomerase family. LeuC type 1 subfamily. As to quaternary structure, heterodimer of LeuC and LeuD. [4Fe-4S] cluster serves as cofactor.

It catalyses the reaction (2R,3S)-3-isopropylmalate = (2S)-2-isopropylmalate. It participates in amino-acid biosynthesis; L-leucine biosynthesis; L-leucine from 3-methyl-2-oxobutanoate: step 2/4. Its function is as follows. Catalyzes the isomerization between 2-isopropylmalate and 3-isopropylmalate, via the formation of 2-isopropylmaleate. The protein is 3-isopropylmalate dehydratase large subunit of Sinorhizobium medicae (strain WSM419) (Ensifer medicae).